We begin with the raw amino-acid sequence, 310 residues long: uncharacterized protein (310 aa).

Transmembrane regions (helical) follow at residues 10 to 30, 44 to 64, 78 to 98, 113 to 133, and 161 to 181; these read AVLS…AYAI, TVNL…ATPA, FSSG…GYSA, LGIA…WILW, and VVVA…PLIA. The span at 285–297 shows a compositional bias: basic and acidic residues; sequence PLEDPKSWQHPDE. The disordered stretch occupies residues 285–310; sequence PLEDPKSWQHPDEFPPSAPLNRDKPN.

The protein belongs to the cation diffusion facilitator (CDF) transporter (TC 2.A.4) family.

The protein localises to the cell membrane. This is an uncharacterized protein from Synechocystis sp. (strain ATCC 27184 / PCC 6803 / Kazusa).